Reading from the N-terminus, the 199-residue chain is Thioredoxin reductase-like selenoprotein T (199 aa).

Residues 1-24 (MRAAGLGLGIGLLLLAALAGPGGS) form the signal peptide. A cross-link (cysteinyl-selenocysteine (Cys-Sec)) is located at residues 50–53 (CVSU). Residue Sec-53 is a non-standard amino acid, selenocysteine. Residues 95–115 (VFKLVLIGLIIVGKDPFAFFG) form a helical membrane-spanning segment.

Belongs to the SelWTH family. Selenoprotein T subfamily. May contain a selenide-sulfide bond between Cys-50 and Sec-53. This bond is speculated to serve as redox-active pair.

Its subcellular location is the endoplasmic reticulum membrane. The enzyme catalyses [thioredoxin]-dithiol + NADP(+) = [thioredoxin]-disulfide + NADPH + H(+). In terms of biological role, selenoprotein with thioredoxin reductase-like oxidoreductase activity. The polypeptide is Thioredoxin reductase-like selenoprotein T (Gallus gallus (Chicken)).